Reading from the N-terminus, the 638-residue chain is 1-deoxy-D-xylulose-5-phosphate synthase (638 aa).

Residues His-77 and 118-120 (AHA) contribute to the thiamine diphosphate site. Residue Asp-149 coordinates Mg(2+). Thiamine diphosphate contacts are provided by residues 150–151 (GS), Asn-178, Tyr-287, and Glu-369. Asn-178 serves as a coordination point for Mg(2+).

It belongs to the transketolase family. DXPS subfamily. As to quaternary structure, homodimer. Requires Mg(2+) as cofactor. It depends on thiamine diphosphate as a cofactor.

It carries out the reaction D-glyceraldehyde 3-phosphate + pyruvate + H(+) = 1-deoxy-D-xylulose 5-phosphate + CO2. It functions in the pathway metabolic intermediate biosynthesis; 1-deoxy-D-xylulose 5-phosphate biosynthesis; 1-deoxy-D-xylulose 5-phosphate from D-glyceraldehyde 3-phosphate and pyruvate: step 1/1. In terms of biological role, catalyzes the acyloin condensation reaction between C atoms 2 and 3 of pyruvate and glyceraldehyde 3-phosphate to yield 1-deoxy-D-xylulose-5-phosphate (DXP). In Phenylobacterium zucineum (strain HLK1), this protein is 1-deoxy-D-xylulose-5-phosphate synthase.